The following is a 466-amino-acid chain: Ras-GEF domain-containing family member 1C (466 aa).

Polar residues predominate over residues 1-23; that stretch reads MPQTLSASDMVTPGSLSPPTTEP. Disordered regions lie at residues 1–35 and 443–466; these read MPQT…PLLD and SESP…LGKT. The N-terminal Ras-GEF domain occupies 34-164; that stretch reads LDGAPSSASL…LLQALHQKLA (131 aa). The Ras-GEF domain maps to 200–446; that stretch reads DPYTLAQQLT…YLASYESESP (247 aa).

Its function is as follows. Guanine nucleotide exchange factor (GEF). This chain is Ras-GEF domain-containing family member 1C (RASGEF1C), found in Macaca fascicularis (Crab-eating macaque).